Reading from the N-terminus, the 692-residue chain is Putative receptor-like protein kinase At1g80870 (692 aa).

Residues 20–40 (LFLILTISSSLVIFFAILYFI) form a helical membrane-spanning segment. Residues 81 to 673 (FDESNVIGKG…GEMDISSTAF (593 aa)) enclose the Protein kinase domain. Residues 87-95 (IGKGGSGTV) and lysine 109 each bind ATP. The Proton acceptor role is filled by aspartate 206. 2 disordered regions span residues 427-446 (EISE…HRNM) and 511-533 (RRKS…GSEM). Composition is skewed to basic residues over residues 432 to 444 (KNKR…KKHR) and 511 to 524 (RRKS…KKKN).

It belongs to the protein kinase superfamily. Ser/Thr protein kinase family.

It localises to the cell membrane. It carries out the reaction L-seryl-[protein] + ATP = O-phospho-L-seryl-[protein] + ADP + H(+). It catalyses the reaction L-threonyl-[protein] + ATP = O-phospho-L-threonyl-[protein] + ADP + H(+). The chain is Putative receptor-like protein kinase At1g80870 from Arabidopsis thaliana (Mouse-ear cress).